Consider the following 193-residue polypeptide: MARNANITRETKETKIEVFLDIDRKGEIKVSTPVPFFNHMLITLLTYMNSTATVSATDKLPYDDHHIIEDVAITLGLAIKEALGDKRGIKRFSHQIIPMDEALVLVSLDISNRGMAFVSLNLKRSEIGGLATENIPHFFQSFAYNSGVTLHISQLSGYNTHHIIEASFKALGLALYEATRIVDNEIRSTKGVI.

This sequence belongs to the imidazoleglycerol-phosphate dehydratase family.

It is found in the cytoplasm. The catalysed reaction is D-erythro-1-(imidazol-4-yl)glycerol 3-phosphate = 3-(imidazol-4-yl)-2-oxopropyl phosphate + H2O. It participates in amino-acid biosynthesis; L-histidine biosynthesis; L-histidine from 5-phospho-alpha-D-ribose 1-diphosphate: step 6/9. The protein is Imidazoleglycerol-phosphate dehydratase of Saccharolobus islandicus (strain Y.N.15.51 / Yellowstone #2) (Sulfolobus islandicus).